Consider the following 131-residue polypeptide: Profilin-8 (131 aa).

The cysteines at positions 13 and 115 are disulfide-linked. The Involved in PIP2 interaction signature appears at alanine 81–threonine 97. A Phosphothreonine modification is found at threonine 111.

The protein belongs to the profilin family. In terms of assembly, occurs in many kinds of cells as a complex with monomeric actin in a 1:1 ratio. Phosphorylated by MAP kinases.

It localises to the cytoplasm. The protein resides in the cytoskeleton. Its function is as follows. Binds to actin and affects the structure of the cytoskeleton. At high concentrations, profilin prevents the polymerization of actin, whereas it enhances it at low concentrations. This chain is Profilin-8, found in Zea mays (Maize).